Reading from the N-terminus, the 214-residue chain is Thymidylate kinase (214 aa).

10-17 (GGEGAGKS) is an ATP binding site.

This sequence belongs to the thymidylate kinase family.

The catalysed reaction is dTMP + ATP = dTDP + ADP. Its function is as follows. Phosphorylation of dTMP to form dTDP in both de novo and salvage pathways of dTTP synthesis. This Brucella abortus (strain S19) protein is Thymidylate kinase.